Consider the following 273-residue polypeptide: Formamidopyrimidine-DNA glycosylase (273 aa).

Pro-2 (schiff-base intermediate with DNA) is an active-site residue. Glu-3 serves as the catalytic Proton donor. Lys-57 acts as the Proton donor; for beta-elimination activity in catalysis. Residues His-91, Arg-110, and Lys-151 each coordinate DNA. The FPG-type zinc-finger motif lies at 236–270; that stretch reads QVYGRKDEACNDCGTIIEAKVIGQRNSYFCPHCQM. The Proton donor; for delta-elimination activity role is filled by Arg-260.

The protein belongs to the FPG family. Monomer. It depends on Zn(2+) as a cofactor.

It catalyses the reaction Hydrolysis of DNA containing ring-opened 7-methylguanine residues, releasing 2,6-diamino-4-hydroxy-5-(N-methyl)formamidopyrimidine.. The catalysed reaction is 2'-deoxyribonucleotide-(2'-deoxyribose 5'-phosphate)-2'-deoxyribonucleotide-DNA = a 3'-end 2'-deoxyribonucleotide-(2,3-dehydro-2,3-deoxyribose 5'-phosphate)-DNA + a 5'-end 5'-phospho-2'-deoxyribonucleoside-DNA + H(+). Involved in base excision repair of DNA damaged by oxidation or by mutagenic agents. Acts as a DNA glycosylase that recognizes and removes damaged bases. Has a preference for oxidized purines, such as 7,8-dihydro-8-oxoguanine (8-oxoG). Has AP (apurinic/apyrimidinic) lyase activity and introduces nicks in the DNA strand. Cleaves the DNA backbone by beta-delta elimination to generate a single-strand break at the site of the removed base with both 3'- and 5'-phosphates. This Actinobacillus pleuropneumoniae serotype 5b (strain L20) protein is Formamidopyrimidine-DNA glycosylase.